A 494-amino-acid polypeptide reads, in one-letter code: Splicing regulatory glutamine/lysine-rich protein 1 (494 aa).

Residues 69-145 (RTVYVGNLNS…RPLKINHSNN (77 aa)) form the RRM domain. 2 positions are modified to phosphoserine: serine 174 and serine 187. Residues 176-494 (ISAAIEPESG…ESPCSKADAV (319 aa)) form a disordered region. A compositionally biased stretch (basic and acidic residues) spans 183 to 192 (ESGKSNERKG). Residues 193–262 (GRSRSHTRSK…KSRSRSRSRD (70 aa)) show a composition bias toward basic residues. The segment covering 263 to 340 (KRKDTREKVK…DRSKETDEKR (78 aa)) has biased composition (basic and acidic residues). Threonine 348 carries the post-translational modification Phosphothreonine. Positions 357–373 (RRSRSTSRERRRRRSRS) are enriched in basic residues. Positions 404-474 (REKERDHISD…SPRTEDEGKV (71 aa)) are enriched in basic and acidic residues. A compositionally biased stretch (polar residues) spans 476-486 (HNGNCQPNEES). A Glycyl lysine isopeptide (Lys-Gly) (interchain with G-Cter in SUMO2) cross-link involves residue lysine 490.

Belongs to the splicing factor SR family. In terms of assembly, homodimer. Binds SFRS1, SFRS2, SFRS3 and SFRS6. Interacts with the spliceosome. Interacts with SREK1IP1.

It is found in the nucleus. Its function is as follows. Participates in the regulation of alternative splicing by modulating the activity of other splice facors. Inhibits the splicing activity of SFRS1, SFRS2 and SFRS6. Augments the splicing activity of SFRS3. This is Splicing regulatory glutamine/lysine-rich protein 1 (Srek1) from Mus musculus (Mouse).